The sequence spans 437 residues: Trigger factor (437 aa).

The 86-residue stretch at 161-246 (DDQVNIDFVG…VNSVSAPVLP (86 aa)) folds into the PPIase FKBP-type domain.

This sequence belongs to the FKBP-type PPIase family. Tig subfamily.

Its subcellular location is the cytoplasm. It carries out the reaction [protein]-peptidylproline (omega=180) = [protein]-peptidylproline (omega=0). Functionally, involved in protein export. Acts as a chaperone by maintaining the newly synthesized protein in an open conformation. Functions as a peptidyl-prolyl cis-trans isomerase. The polypeptide is Trigger factor (Pseudomonas putida (strain GB-1)).